The sequence spans 394 residues: Na(+)/H(+) antiporter NhaA (394 aa).

11 helical membrane-spanning segments follow: residues alanine 24–alanine 44, leucine 58–leucine 78, threonine 96–leucine 116, glycine 126–glycine 146, isoleucine 155–phenylalanine 175, isoleucine 180–alanine 200, alanine 214–leucine 234, valine 267–isoleucine 287, valine 300–valine 320, valine 336–leucine 356, and glycine 370–glycine 390.

It belongs to the NhaA Na(+)/H(+) (TC 2.A.33) antiporter family.

The protein localises to the cell inner membrane. It carries out the reaction Na(+)(in) + 2 H(+)(out) = Na(+)(out) + 2 H(+)(in). Its function is as follows. Na(+)/H(+) antiporter that extrudes sodium in exchange for external protons. The chain is Na(+)/H(+) antiporter NhaA from Azorhizobium caulinodans (strain ATCC 43989 / DSM 5975 / JCM 20966 / LMG 6465 / NBRC 14845 / NCIMB 13405 / ORS 571).